Reading from the N-terminus, the 211-residue chain is ATP phosphoribosyltransferase (211 aa).

This sequence belongs to the ATP phosphoribosyltransferase family. Short subfamily. As to quaternary structure, heteromultimer composed of HisG and HisZ subunits.

Its subcellular location is the cytoplasm. The catalysed reaction is 1-(5-phospho-beta-D-ribosyl)-ATP + diphosphate = 5-phospho-alpha-D-ribose 1-diphosphate + ATP. The protein operates within amino-acid biosynthesis; L-histidine biosynthesis; L-histidine from 5-phospho-alpha-D-ribose 1-diphosphate: step 1/9. Functionally, catalyzes the condensation of ATP and 5-phosphoribose 1-diphosphate to form N'-(5'-phosphoribosyl)-ATP (PR-ATP). Has a crucial role in the pathway because the rate of histidine biosynthesis seems to be controlled primarily by regulation of HisG enzymatic activity. The polypeptide is ATP phosphoribosyltransferase (Bacillus cereus (strain ATCC 10987 / NRS 248)).